Reading from the N-terminus, the 341-residue chain is MSVLTNPSLLLLRNSEKLVGKSILVVNFVQDGFLAELKKRNPESKITAFSYNHANGEFAKNTPGVDVCVNHCISGNDFDLVILYYPKSKPEVLMALDNIRAVITADAELLVVGENKSGVKSIEKQLTDKANFSNKIDSAKHCVLYSFAELKQLSQFNISDYHKPFTVSVADSEFTAISIPGVFNHGNLDVGTKILLENAPLIKQGTVLDFGCGAGLIATYLGLQNPALSFVCSDVSALAIYATTQTLKLNNIKGEALLSDGLTNITGKFDLIISNPPFHTGIATDYTVAETFLANAKQHLTKAGKLNIVANSFLKYPPILEAQFDNYQTVFKNNKFAVYSS.

This sequence belongs to the methyltransferase superfamily. RsmC family. As to quaternary structure, monomer.

It is found in the cytoplasm. The enzyme catalyses guanosine(1207) in 16S rRNA + S-adenosyl-L-methionine = N(2)-methylguanosine(1207) in 16S rRNA + S-adenosyl-L-homocysteine + H(+). Functionally, specifically methylates the guanine in position 1207 of 16S rRNA in the 30S particle. This chain is Ribosomal RNA small subunit methyltransferase C, found in Pseudoalteromonas translucida (strain TAC 125).